Here is a 129-residue protein sequence, read N- to C-terminus: D-ribose pyranase 2 (129 aa).

The Proton donor role is filled by histidine 20. Substrate is bound by residues aspartate 28, histidine 96, and 118-120 (YAN).

This sequence belongs to the RbsD / FucU family. RbsD subfamily. As to quaternary structure, homodecamer.

The protein localises to the cytoplasm. The catalysed reaction is beta-D-ribopyranose = beta-D-ribofuranose. Its pathway is carbohydrate metabolism; D-ribose degradation; D-ribose 5-phosphate from beta-D-ribopyranose: step 1/2. Catalyzes the interconversion of beta-pyran and beta-furan forms of D-ribose. In Streptomyces griseus subsp. griseus (strain JCM 4626 / CBS 651.72 / NBRC 13350 / KCC S-0626 / ISP 5235), this protein is D-ribose pyranase 2.